The sequence spans 208 residues: Small ribosomal subunit protein uS5 (208 aa).

The interval 1–38 is disordered; sequence MPGRERRDGGRSADDNQKKNDRRGGRRDDRRNQQQDER. Residues 41–104 enclose the S5 DRBM domain; the sequence is YIERVVTINR…EEARKNFFRV (64 aa).

Belongs to the universal ribosomal protein uS5 family. As to quaternary structure, part of the 30S ribosomal subunit. Contacts proteins S4 and S8.

With S4 and S12 plays an important role in translational accuracy. Its function is as follows. Located at the back of the 30S subunit body where it stabilizes the conformation of the head with respect to the body. The sequence is that of Small ribosomal subunit protein uS5 from Corynebacterium diphtheriae (strain ATCC 700971 / NCTC 13129 / Biotype gravis).